Consider the following 272-residue polypeptide: Golgi to ER traffic protein 5 (272 aa).

Disordered stretches follow at residues 1 to 35 and 85 to 105; these read MSTVDQSTVTTALSSSSSNRHQGNDTYSIPKHSGT and LHAPHPEMPKKTKQPLAPGSS. Positions 108 to 198 constitute a Ubiquitin-like domain; sequence ITVHLKSARN…VEFGVMIIGG (91 aa). The interval 212–231 is disordered; the sequence is SAEQKESYEPPKPAVGPSGE.

Belongs to the GET5 family. Forms homodimers via its C-terminal domain. Component of the get4/get5/sgt2 sorting complex. Binds directly sgt12 homodimers.

It is found in the cytoplasm. Its function is as follows. Component of the get4/get5/sgt2 sorting complex involved in the GET (guided entry of TA proteins) pathway that leads to the insertion of tail-anchored (TA) proteins into the endoplasmic reticulum. Get4 and get5 form an obligate complex that catalyzes the transfer of tail-anchored proteins destined to the endoplasmic reticulum from sgt2 to the cytosolic targeting factor which then targets the TA protein to the ER membrane via get1/get2. The chain is Golgi to ER traffic protein 5 from Aspergillus fumigatus (strain ATCC MYA-4609 / CBS 101355 / FGSC A1100 / Af293) (Neosartorya fumigata).